A 748-amino-acid chain; its full sequence is Formate acetyltransferase (748 aa).

Residues 5–618 enclose the PFL domain; it reads NNHTNAWQGF…KTGNTPDGRK (614 aa). The S-acetylcysteine intermediate role is filled by Cys-412. Cys-413 (cysteine radical intermediate) is an active-site residue. The region spanning 625–748 is the Glycine radical domain; sequence PGANPMHGRD…VISRTFHESM (124 aa). At Gly-723 the chain carries Glycine radical.

The protein belongs to the glycyl radical enzyme (GRE) family. PFL subfamily. As to quaternary structure, homodimer.

Its subcellular location is the cytoplasm. The enzyme catalyses formate + acetyl-CoA = pyruvate + CoA. It functions in the pathway fermentation; pyruvate fermentation; formate from pyruvate: step 1/1. In terms of biological role, catalyzes the conversion of pyruvate to formate and acetyl-CoA. The sequence is that of Formate acetyltransferase (pflB) from Staphylococcus epidermidis (strain ATCC 12228 / FDA PCI 1200).